A 438-amino-acid polypeptide reads, in one-letter code: Glutamyl-tRNA reductase (438 aa).

Residues 49 to 52, Ser109, 114 to 116, and Gln120 contribute to the substrate site; these read TCNR and EQQ. Catalysis depends on Cys50, which acts as the Nucleophile. An NADP(+)-binding site is contributed by 191-196; sequence GAGAMA.

The protein belongs to the glutamyl-tRNA reductase family. As to quaternary structure, homodimer.

The enzyme catalyses (S)-4-amino-5-oxopentanoate + tRNA(Glu) + NADP(+) = L-glutamyl-tRNA(Glu) + NADPH + H(+). The protein operates within porphyrin-containing compound metabolism; protoporphyrin-IX biosynthesis; 5-aminolevulinate from L-glutamyl-tRNA(Glu): step 1/2. Functionally, catalyzes the NADPH-dependent reduction of glutamyl-tRNA(Glu) to glutamate 1-semialdehyde (GSA). The polypeptide is Glutamyl-tRNA reductase (Corynebacterium diphtheriae (strain ATCC 700971 / NCTC 13129 / Biotype gravis)).